Consider the following 302-residue polypeptide: Oxygen-dependent coproporphyrinogen-III oxidase (302 aa).

Ser94 contacts substrate. His98 and His108 together coordinate a divalent metal cation. His108 acts as the Proton donor in catalysis. A substrate-binding site is contributed by Asn110–Arg112. A divalent metal cation is bound by residues His147 and His177. The tract at residues Tyr242–Gln277 is important for dimerization. Position 260 to 262 (Gly260 to Arg262) interacts with substrate.

This sequence belongs to the aerobic coproporphyrinogen-III oxidase family. Homodimer. A divalent metal cation serves as cofactor.

Its subcellular location is the cytoplasm. It carries out the reaction coproporphyrinogen III + O2 + 2 H(+) = protoporphyrinogen IX + 2 CO2 + 2 H2O. It functions in the pathway porphyrin-containing compound metabolism; protoporphyrin-IX biosynthesis; protoporphyrinogen-IX from coproporphyrinogen-III (O2 route): step 1/1. Its function is as follows. Involved in the heme biosynthesis. Catalyzes the aerobic oxidative decarboxylation of propionate groups of rings A and B of coproporphyrinogen-III to yield the vinyl groups in protoporphyrinogen-IX. This Shewanella sp. (strain MR-4) protein is Oxygen-dependent coproporphyrinogen-III oxidase.